Reading from the N-terminus, the 505-residue chain is ATP synthase subunit alpha (505 aa).

171–178 (GDRQTGKT) contributes to the ATP binding site.

The protein belongs to the ATPase alpha/beta chains family. As to quaternary structure, F-type ATPases have 2 components, CF(1) - the catalytic core - and CF(0) - the membrane proton channel. CF(1) has five subunits: alpha(3), beta(3), gamma(1), delta(1), epsilon(1). CF(0) has three main subunits: a(1), b(2) and c(9-12). The alpha and beta chains form an alternating ring which encloses part of the gamma chain. CF(1) is attached to CF(0) by a central stalk formed by the gamma and epsilon chains, while a peripheral stalk is formed by the delta and b chains.

It localises to the cell inner membrane. The enzyme catalyses ATP + H2O + 4 H(+)(in) = ADP + phosphate + 5 H(+)(out). In terms of biological role, produces ATP from ADP in the presence of a proton gradient across the membrane. The alpha chain is a regulatory subunit. This is ATP synthase subunit alpha from Campylobacter fetus subsp. fetus (strain 82-40).